The following is a 1573-amino-acid chain: Mediator of RNA polymerase II transcription subunit 1 (1573 aa).

Residues 588-592 (LTSLL) carry the LXXLL motif 1 motif. Disordered regions lie at residues 595–691 (TSNS…EDDF), 774–883 (SKLP…FKDF), and 928–1564 (LGGP…GDDD). The span at 606-617 (PTPPQHTPPPAS) shows a compositional bias: pro residues. An LXXLL motif 2 motif is present at residues 629–633 (LMNLL). Positions 651–668 (ERQNSSGSPRTELGSSAS) are enriched in polar residues. The span at 678-691 (TGTEKMKNQTEDDF) shows a compositional bias: basic and acidic residues. Composition is skewed to polar residues over residues 791 to 804 (RDSSSSGHSQSTLF), 835 to 864 (GSPNSDSPNTFFNSVDFNPDLLNSQSQSGF), and 934 to 944 (QETQSRSQSPL). The span at 949–961 (LGKDRPQKQKVKE) shows a compositional bias: basic and acidic residues. Over residues 963-973 (GNGGGAGGGLS) the composition is skewed to gly residues. Low complexity-rich tracts occupy residues 1025-1038 (PTSTGGSKSPGTSG), 1053-1085 (KITIQIPKGTMSVGKPSSHSQYSSSGSSSSSSS), 1092-1116 (SSLSSSASGKIKSNKSDGSSGMKIG), 1124-1143 (SGQSGQSNSQSKNSSQSMGK), and 1155-1164 (SSNVNNSSGS). Polar residues predominate over residues 1176–1193 (MNPSLSKPNISPSHSRPS). Residues 1226–1277 (LSGSGSNSTTKSSSGLVSSGSLTQKPNSSSSSSSSSSSSSSSSSSSSSSFSS) are compositionally biased toward low complexity. Residues 1278-1290 (GVSQNLHSSSKGK) are compositionally biased toward polar residues. Residues 1350–1362 (PTKREKGEKDKSK) show a composition bias toward basic and acidic residues. 2 stretches are compositionally biased toward polar residues: residues 1420–1435 (SQMQKNYGSPLISGST) and 1443–1457 (PSHNKSPAYTPQALD). The span at 1461–1471 (ESGSSSIAEKS) shows a compositional bias: low complexity. The span at 1496-1505 (KHKKHKKEKK) shows a compositional bias: basic residues. Residues 1506–1518 (RLKDKDRDREKKK) show a composition bias toward basic and acidic residues.

It belongs to the Mediator complex subunit 1 family. Component of the Mediator complex.

The protein resides in the nucleus. Functionally, component of the Mediator complex, a coactivator involved in the regulated transcription of nearly all RNA polymerase II-dependent genes. Mediator functions as a bridge to convey information from gene-specific regulatory proteins to the basal RNA polymerase II transcription machinery. Mediator is recruited to promoters by direct interactions with regulatory proteins and serves as a scaffold for the assembly of a functional preinitiation complex with RNA polymerase II and the general transcription factors. This Xenopus tropicalis (Western clawed frog) protein is Mediator of RNA polymerase II transcription subunit 1 (med1).